Here is a 369-residue protein sequence, read N- to C-terminus: N-succinylamino acid racemase (369 aa).

Residue K163 is the Proton donor of the active site. Mg(2+)-binding residues include D188, E213, and D238. The active-site Proton acceptor is the K262.

The protein belongs to the mandelate racemase/muconate lactonizing enzyme family. MenC type 2 subfamily. In terms of assembly, homooctamer. Tetramer of dimers. A divalent metal cation is required as a cofactor.

It catalyses the reaction (1R,6R)-6-hydroxy-2-succinyl-cyclohexa-2,4-diene-1-carboxylate = 2-succinylbenzoate + H2O. Its function is as follows. Acts as a N-succinylamino acid racemase (NSAR) that catalyzes the racemization of N-succinyl-L-phenylglycine. Also converts 2-succinyl-6-hydroxy-2,4-cyclohexadiene-1-carboxylate (SHCHC) to 2-succinylbenzoate (OSB). Catalyzes both N-succinylamino acid racemization and OSB synthesis at equivalent rates. However, NSAR activity is probably the protein's biological function, because menaquinone biosynthesis genes are missing in this species. In Thermus thermophilus (strain ATCC 27634 / DSM 579 / HB8), this protein is N-succinylamino acid racemase.